The primary structure comprises 475 residues: MEMESSLPHVMLVSFPGQGHISPLLRLGKIIASKGLIVTFVTTEEPLGKKMRQANNIQDGVLKPVGLGFLRFEFFEDGFVYKEDFDLLQKSLEVSGKREIKNLVKKYEKQPVRCLINNAFVPWVCDIAEELQIPSAVLWVQSCACLAAYYYYHHQLVKFPTETEPEITVDVPFKPLTLKHDEIPSFLHPSSPLSSIGGTILEQIKRLHKPFSVLIETFQELEKDTIDHMSQLCPQVNFNPIGPLFTMAKTIRSDIKGDISKPDSDCIEWLDSREPSSVVYISFGTLAFLKQNQIDEIAHGILNSGLSCLWVLRPPLEGLAIEPHVLPLELEEKGKIVEWCQQEKVLAHPAVACFLSHCGWNSTMEALTSGVPVICFPQWGDQVTNAVYMIDVFKTGLRLSRGASDERIVPREEVAERLLEATVGEKAVELRENARRWKEEAESAVAYGGTSERNFQEFVDKLVDVKTMTNINNVV.

H20 serves as the catalytic Proton acceptor. Position 20 (H20) interacts with an anthocyanidin. UDP-alpha-D-glucose contacts are provided by Q342, H357, W360, N361, S362, and E365. Residue G380 coordinates an anthocyanidin. 2 residues coordinate UDP-alpha-D-glucose: D381 and Q382.

The protein belongs to the UDP-glycosyltransferase family.

It catalyses the reaction (E)-4-coumarate + UDP-alpha-D-glucose = 4-O-(beta-D-glucosyl)-trans-4-coumarate + UDP + H(+). The catalysed reaction is (E)-ferulate + UDP-alpha-D-glucose = 1-O-[(E)-feruloyl]-beta-D-glucose + UDP. It carries out the reaction (E)-caffeate + UDP-alpha-D-glucose = 1-O-[(E)-caffeoyl]-beta-D-glucose + UDP. The enzyme catalyses (E)-sinapate + UDP-alpha-D-glucose = 1-O-(trans-sinapoyl)-beta-D-glucose + UDP. It catalyses the reaction (E)-cinnamate + UDP-alpha-D-glucose = 1-O-(trans-cinnamoyl)-beta-D-glucose + UDP. In terms of biological role, UDP-glucosyltransferase that forms glucose esters with phenylpropanoids. Glucosylates 4-coumarate, ferulate, caffeate, sinapate and cinnamate. The chain is UDP-glycosyltransferase 84A4 from Arabidopsis thaliana (Mouse-ear cress).